A 425-amino-acid chain; its full sequence is Serine--tRNA ligase (425 aa).

230 to 232 (TSE) serves as a coordination point for L-serine. Residue 261–263 (RKE) coordinates ATP. Glu284 lines the L-serine pocket. 348–351 (EISS) is an ATP binding site. Ser385 provides a ligand contact to L-serine.

The protein belongs to the class-II aminoacyl-tRNA synthetase family. Type-1 seryl-tRNA synthetase subfamily. As to quaternary structure, homodimer. The tRNA molecule binds across the dimer.

It is found in the cytoplasm. The enzyme catalyses tRNA(Ser) + L-serine + ATP = L-seryl-tRNA(Ser) + AMP + diphosphate + H(+). It carries out the reaction tRNA(Sec) + L-serine + ATP = L-seryl-tRNA(Sec) + AMP + diphosphate + H(+). It participates in aminoacyl-tRNA biosynthesis; selenocysteinyl-tRNA(Sec) biosynthesis; L-seryl-tRNA(Sec) from L-serine and tRNA(Sec): step 1/1. Functionally, catalyzes the attachment of serine to tRNA(Ser). Is also able to aminoacylate tRNA(Sec) with serine, to form the misacylated tRNA L-seryl-tRNA(Sec), which will be further converted into selenocysteinyl-tRNA(Sec). The protein is Serine--tRNA ligase of Wolbachia pipientis wMel.